The primary structure comprises 214 residues: Probable transaldolase (214 aa).

The active-site Schiff-base intermediate with substrate is K83.

The protein belongs to the transaldolase family. Type 3B subfamily.

The protein resides in the cytoplasm. It carries out the reaction D-sedoheptulose 7-phosphate + D-glyceraldehyde 3-phosphate = D-erythrose 4-phosphate + beta-D-fructose 6-phosphate. It functions in the pathway carbohydrate degradation; pentose phosphate pathway; D-glyceraldehyde 3-phosphate and beta-D-fructose 6-phosphate from D-ribose 5-phosphate and D-xylulose 5-phosphate (non-oxidative stage): step 2/3. In terms of biological role, transaldolase is important for the balance of metabolites in the pentose-phosphate pathway. The protein is Probable transaldolase of Leptospira biflexa serovar Patoc (strain Patoc 1 / Ames).